We begin with the raw amino-acid sequence, 334 residues long: Sucrose operon repressor (334 aa).

Positions 6 to 63 (VTIKDIAELAGVSKATASLVLNGRGKELRVAQETRERVLAIAREQHYQPSIHARSLRD) constitute an HTH lacI-type domain. A DNA-binding region (H-T-H motif) is located at residues 8–27 (IKDIAELAGVSKATASLVLN).

Functionally, repressor for the scr operon. Binds D-fructose as an inducer. The protein is Sucrose operon repressor (scrR) of Klebsiella pneumoniae.